Reading from the N-terminus, the 43-residue chain is Defensin (43 aa).

Intrachain disulfides connect Cys3–Cys34, Cys20–Cys39, and Cys24–Cys41.

It localises to the secreted. Antibacterial peptide active against Gram-positive and Gram-negative bacteria. The protein is Defensin of Palomena prasina (Green shield bug).